Reading from the N-terminus, the 1502-residue chain is E3 ubiquitin-protein ligase UPL4 (1502 aa).

Over residues 1–21 the composition is skewed to basic and acidic residues; that stretch reads MENRGQKRMEVVEELPADKRA. The interval 1 to 107 is disordered; that stretch reads MENRGQKRME…DYQRQRSSGD (107 aa). A compositionally biased stretch (polar residues) spans 22–46; it reads CNSQDFRPSTSGSSVQAQANDTNPG. The span at 67-90 shows a compositional bias: acidic residues; that stretch reads DEEEQEEQDKEDSDYGSCDSDEED. Residues 91 to 107 are compositionally biased toward basic and acidic residues; that stretch reads PRQRVLQDYQRQRSSGD. ARM repeat units lie at residues 143-183, 186-226, 228-265, and 267-306; these read EESL…YLCD, PPSV…KISR, EPVACLNAGAIMAVLSFIDFFSTSIQRVAISTVVNICK, and LSSESPSPFMDAVPILCTLLQYEDRQLVENVAICLTKIAD. The segment at 833 to 881 is disordered; the sequence is CQAESSSPMEIDSESSDASQLQGSQVEDQTQLPGQQNASSSETSSEKED. Residues 849-875 show a composition bias toward polar residues; that stretch reads DASQLQGSQVEDQTQLPGQQNASSSET. Residues 1022-1096 are K-box; it reads RPVPHSEFVS…IRHHPQHLSS (75 aa). The region spanning 1128-1502 is the HECT domain; sequence KMMELYGNQK…TEGQGSFHLS (375 aa). The active-site Glycyl thioester intermediate is Cys1469.

It belongs to the UPL family. K-HECT subfamily.

The enzyme catalyses S-ubiquitinyl-[E2 ubiquitin-conjugating enzyme]-L-cysteine + [acceptor protein]-L-lysine = [E2 ubiquitin-conjugating enzyme]-L-cysteine + N(6)-ubiquitinyl-[acceptor protein]-L-lysine.. It participates in protein modification; protein ubiquitination. In terms of biological role, probable E3 ubiquitin-protein ligase which mediates ubiquitination and subsequent proteasomal degradation of target proteins. This chain is E3 ubiquitin-protein ligase UPL4 (UPL4), found in Arabidopsis thaliana (Mouse-ear cress).